The sequence spans 111 residues: Ribosome-binding factor A (111 aa).

This sequence belongs to the RbfA family. Monomer. Binds 30S ribosomal subunits, but not 50S ribosomal subunits or 70S ribosomes.

The protein resides in the cytoplasm. In terms of biological role, one of several proteins that assist in the late maturation steps of the functional core of the 30S ribosomal subunit. Associates with free 30S ribosomal subunits (but not with 30S subunits that are part of 70S ribosomes or polysomes). Required for efficient processing of 16S rRNA. May interact with the 5'-terminal helix region of 16S rRNA. This chain is Ribosome-binding factor A, found in Helicobacter pylori (strain ATCC 700392 / 26695) (Campylobacter pylori).